We begin with the raw amino-acid sequence, 160 residues long: Nucleotide-binding protein VSAL_I1728 (160 aa).

Belongs to the YajQ family.

Functionally, nucleotide-binding protein. The chain is Nucleotide-binding protein VSAL_I1728 from Aliivibrio salmonicida (strain LFI1238) (Vibrio salmonicida (strain LFI1238)).